The sequence spans 252 residues: Fatty acid elongase 4 (252 aa).

Residues 25–45 form a helical membrane-spanning segment; that stretch reads LVSWHALVLGHLLYLFVVFVM. Asn56 carries N-linked (GlcNAc...) asparagine glycosylation. A helical transmembrane segment spans residues 60-80; the sequence is VLVVYNVLQICLSAAMAINLS. N-linked (GlcNAc...) asparagine glycosylation is present at Asn89. Transmembrane regions (helical) follow at residues 100–120, 127–147, 150–170, 187–207, and 214–234; these read FWMF…VFIL, QLSF…GILL, GLAN…HFLM, FLLT…AILV, and FTLG…VLFL. The HxxHH motif signature appears at 132-136; the sequence is HVYHH. The active-site Nucleophile is the His135.

It belongs to the ELO family.

The protein localises to the membrane. It carries out the reaction (5Z,8Z,11Z,14Z)-eicosatetraenoyl-CoA + malonyl-CoA + H(+) = (7Z,10Z,13Z,16Z)-3-oxodocosatetraenoyl-CoA + CO2 + CoA. It functions in the pathway lipid metabolism; fatty acid biosynthesis. Its function is as follows. Involved in the synthesis of fatty acids. Elongates arachidonate and other C20 polyunsaturated fatty acids (PUFAs) with a preference for n-6 PUFAs. Not involved in fatty acid synthesis up to C18. This Trypanosoma brucei brucei (strain 927/4 GUTat10.1) protein is Fatty acid elongase 4.